The following is a 38-amino-acid chain: Beta-galactosidase (38 aa).

The protein belongs to the glycosyl hydrolase 35 family. As to quaternary structure, heterodimer of a large and a small subunit. In terms of processing, the small subunit is N-glycosylated.

The enzyme catalyses Hydrolysis of terminal non-reducing beta-D-galactose residues in beta-D-galactosides.. Its function is as follows. Involved in cell wall degradation. Degrades polysaccharides containing beta-(1--&gt;4)-linked galactans, acting as an exo-(1--&gt;4)-beta-D-galactanase. In Hordeum vulgare (Barley), this protein is Beta-galactosidase.